We begin with the raw amino-acid sequence, 105 residues long: Large ribosomal subunit protein uL24 (105 aa).

This sequence belongs to the universal ribosomal protein uL24 family. In terms of assembly, part of the 50S ribosomal subunit.

Functionally, one of two assembly initiator proteins, it binds directly to the 5'-end of the 23S rRNA, where it nucleates assembly of the 50S subunit. Its function is as follows. One of the proteins that surrounds the polypeptide exit tunnel on the outside of the subunit. This Nitrosospira multiformis (strain ATCC 25196 / NCIMB 11849 / C 71) protein is Large ribosomal subunit protein uL24.